A 357-amino-acid polypeptide reads, in one-letter code: Alkanal monooxygenase alpha chain (357 aa).

This sequence belongs to the bacterial luciferase oxidoreductase family. Heterodimer of an alpha and a beta chain.

The enzyme catalyses a long-chain fatty aldehyde + FMNH2 + O2 = a long-chain fatty acid + hnu + FMN + H2O + 2 H(+). Functionally, light-emitting reaction in luminous bacteria. This is Alkanal monooxygenase alpha chain (luxA) from Kryptophanaron alfredi symbiont.